The primary structure comprises 631 residues: Pescadillo homolog (631 aa).

A BRCT domain is found at 321 to 414 (RLRNLFKGLK…QLLPTNKYFL (94 aa)). Disordered regions lie at residues 450–469 (HAQS…EDDT) and 489–569 (EYKK…MVKP). A phosphoserine mark is found at serine 453 and serine 457. Composition is skewed to acidic residues over residues 454 to 469 (DDES…EDDT) and 499 to 524 (VNED…EELD). The stretch at 510-541 (FDGEQESDEEEEELDEKTKRLQEEKKKMSVQS) forms a coiled coil. Residues 525–536 (EKTKRLQEEKKK) show a composition bias toward basic and acidic residues. Basic residues predominate over residues 543–552 (KVHKVNKRQL). The segment covering 553 to 562 (HKAEVDEHRL) has biased composition (basic and acidic residues).

It belongs to the pescadillo family.

The protein resides in the nucleus. The protein localises to the nucleolus. It localises to the nucleoplasm. In terms of biological role, required for maturation of ribosomal RNAs and formation of the large ribosomal subunit. The protein is Pescadillo homolog of Drosophila mojavensis (Fruit fly).